The following is a 420-amino-acid chain: Innexin-3 (420 aa).

A run of 4 helical transmembrane segments spans residues 33–53, 104–124, 193–213, and 278–298; these read ATLL…GSAI, WVPI…WIWS, MLYI…FIIL, and IYLF…INTL. Residues 378–405 are disordered; sequence NRDFHHGHSTKSTSPGLEEGHHEHLYTP. Residues 395-405 are compositionally biased toward basic and acidic residues; it reads EEGHHEHLYTP.

This sequence belongs to the pannexin family. Interacts with F-actin. In terms of tissue distribution, evenly distributed along the adjoining membranes of the two pm5 pharyngeal muscle cells.

The protein localises to the cell membrane. The protein resides in the cell junction. It localises to the gap junction. In terms of biological role, structural component of gap junctions. Plays a role in maintaining gap junction activity to promote phayngeal muscle contraction. This Caenorhabditis elegans protein is Innexin-3.